The following is a 389-amino-acid chain: MLSTGSNSPEAAVLPGKPEVGLPLWLLAELTYRCPLQCPYCSNPLDFAEQGKELSTEQWIKVFREAREMGAAQLGFSGGEPLVRQDLAELIGEARKLGFYTNLITSGIGLTEQKISDFKKAGLDHIQISFQASDEQVNNLLAGSKKAFAQKLEMARAVKAHGYPMVLNFVTHRHNIDKIDRIIELCIALEADFVELATCQFYGWAQLNRVGLLPTKEQLVRAERITNEYRARLEAQGHLCKLIFVTPDYYEERPKACMNGWGSIFLTVTPDGTALPCHGARQMPVQFPNVRDHSMQHIWYDSFGFNRFRGYDWMPEPCRSCDEKEKDFGGCRCQAFMLTGDASNADPVCSKSPHHGMILQAREESETATHTIEQLAFRNERNSRLIAKG.

The Radical SAM core domain occupies 20–235 (VGLPLWLLAE…TNEYRARLEA (216 aa)). The [4Fe-4S] cluster site is built by Cys34, Cys38, and Cys41.

Belongs to the radical SAM superfamily. PqqE family. As to quaternary structure, interacts with PqqD. The interaction is necessary for activity of PqqE. [4Fe-4S] cluster is required as a cofactor.

The enzyme catalyses [PQQ precursor protein] + S-adenosyl-L-methionine = E-Y cross-linked-[PQQ precursor protein] + 5'-deoxyadenosine + L-methionine + H(+). The protein operates within cofactor biosynthesis; pyrroloquinoline quinone biosynthesis. In terms of biological role, catalyzes the cross-linking of a glutamate residue and a tyrosine residue in the PqqA protein as part of the biosynthesis of pyrroloquinoline quinone (PQQ). The protein is PqqA peptide cyclase of Pseudomonas fluorescens (strain ATCC BAA-477 / NRRL B-23932 / Pf-5).